Consider the following 212-residue polypeptide: 3-demethoxyubiquinol 3-hydroxylase (212 aa).

Over residues Met1–Pro14 the composition is skewed to low complexity. The tract at residues Met1–Glu22 is disordered. Fe cation-binding residues include Glu58, Glu89, His92, Glu141, Glu173, and His176.

It belongs to the COQ7 family. Fe cation is required as a cofactor.

It is found in the cell membrane. It catalyses the reaction a 5-methoxy-2-methyl-3-(all-trans-polyprenyl)benzene-1,4-diol + AH2 + O2 = a 3-demethylubiquinol + A + H2O. Its pathway is cofactor biosynthesis; ubiquinone biosynthesis. Its function is as follows. Catalyzes the hydroxylation of 2-nonaprenyl-3-methyl-6-methoxy-1,4-benzoquinol during ubiquinone biosynthesis. This is 3-demethoxyubiquinol 3-hydroxylase from Rhodospirillum rubrum (strain ATCC 11170 / ATH 1.1.1 / DSM 467 / LMG 4362 / NCIMB 8255 / S1).